The sequence spans 403 residues: F-box protein At1g60400 (403 aa).

The region spanning 13–59 is the F-box domain; it reads IDRLSALPEHLLCRILSELSTKDSVRTSVLSKHWRNLWLHVPVLELE.

This chain is F-box protein At1g60400, found in Arabidopsis thaliana (Mouse-ear cress).